The following is a 204-amino-acid chain: Dephospho-CoA kinase (204 aa).

The DPCK domain occupies 3–204 (VIGLTGGIGS…DRLDLAYRAH (202 aa)). 11–16 (GSGKSY) contacts ATP.

The protein belongs to the CoaE family.

The protein resides in the cytoplasm. It carries out the reaction 3'-dephospho-CoA + ATP = ADP + CoA + H(+). It functions in the pathway cofactor biosynthesis; coenzyme A biosynthesis; CoA from (R)-pantothenate: step 5/5. Its function is as follows. Catalyzes the phosphorylation of the 3'-hydroxyl group of dephosphocoenzyme A to form coenzyme A. The polypeptide is Dephospho-CoA kinase (Ralstonia nicotianae (strain ATCC BAA-1114 / GMI1000) (Ralstonia solanacearum)).